Reading from the N-terminus, the 367-residue chain is Multifunctional tryptophan biosynthesis protein (367 aa).

A Glutamine amidotransferase type-1 domain is found at 7-201; the sequence is NVVMIDNYDS…LNVSGGYWEE (195 aa). 58 to 60 lines the L-glutamine pocket; that stretch reads GPG. The active-site Nucleophile; for GATase activity is the cysteine 86. Residues glutamine 90 and 136 to 137 contribute to the L-glutamine site; that span reads SL. Residues histidine 175 and glutamate 177 each act as for GATase activity in the active site. Residues 209 to 367 are indole-3-glycerol phosphate synthase; sequence RKESILEKIY…TVLLIVKMLS (159 aa).

Tetramer of two components I and two components II.

It catalyses the reaction chorismate + L-glutamine = anthranilate + pyruvate + L-glutamate + H(+). The enzyme catalyses 1-(2-carboxyphenylamino)-1-deoxy-D-ribulose 5-phosphate + H(+) = (1S,2R)-1-C-(indol-3-yl)glycerol 3-phosphate + CO2 + H2O. The protein operates within amino-acid biosynthesis; L-tryptophan biosynthesis; L-tryptophan from chorismate: step 1/5. It functions in the pathway amino-acid biosynthesis; L-tryptophan biosynthesis; L-tryptophan from chorismate: step 4/5. The sequence is that of Multifunctional tryptophan biosynthesis protein from Pichia angusta (Yeast).